The chain runs to 695 residues: NADPH--cytochrome P450 reductase (695 aa).

Topologically, residues 1 to 8 (MAQLDTLD) are lumenal. A helical membrane pass occupies residues 9-31 (LVVLVALLVGSVAYFTKGTYWAV). Topologically, residues 32 to 695 (AKDPYASSGP…SGSYQEDVWS (664 aa)) are cytoplasmic. The region spanning 66–221 (CVIFYGSQTG…DFLAWKEPMW (156 aa)) is the Flavodoxin-like domain. FMN is bound by residues 72–77 (SQTGTA), 123–126 (ATYG), 169–178 (LGNNTYEHYN), and Asp-204. Residues 277-538 (HNPFIAPIVE…HVRHSNFKLP (262 aa)) enclose the FAD-binding FR-type domain. Arg-296 is an NADP(+) binding site. FAD is bound by residues 451–454 (RYYS), 469–471 (TAV), and 486–489 (GVTT). NADP(+) contacts are provided by residues Thr-552, 614–615 (SR), 620–624 (KVYVQ), and Glu-656. Trp-694 contributes to the FAD binding site.

Belongs to the NADPH--cytochrome P450 reductase family. The protein in the N-terminal section; belongs to the flavodoxin family. It in the C-terminal section; belongs to the flavoprotein pyridine nucleotide cytochrome reductase family. The cofactor is FAD. Requires FMN as cofactor.

The protein localises to the endoplasmic reticulum membrane. It is found in the mitochondrion outer membrane. The protein resides in the cell membrane. The enzyme catalyses 2 oxidized [cytochrome P450] + NADPH = 2 reduced [cytochrome P450] + NADP(+) + H(+). Its function is as follows. This enzyme is required for electron transfer from NADP to cytochrome P450 in microsomes. It can also provide electron transfer to heme oxygenase and cytochrome B5. Involved in ergosterol biosynthesis. This Aspergillus oryzae (strain ATCC 42149 / RIB 40) (Yellow koji mold) protein is NADPH--cytochrome P450 reductase.